Here is a 441-residue protein sequence, read N- to C-terminus: Insulinoma-associated protein 1 (441 aa).

Over residues M1 to K12 the composition is skewed to basic residues. An SNAG domain region spans residues M1–V20. Disordered stretches follow at residues M1–L31, T43–R189, L205–P224, and R278–L316. Basic and acidic residues predominate over residues R19–G28. The segment covering N74 to Y83 has biased composition (polar residues). Residues V89–Y98 are compositionally biased toward basic and acidic residues. Low complexity-rich tracts occupy residues V138–S147 and G169–P180. Residues Y258–H280 form a C2H2-type 1 zinc finger. Positions A292–T302 are enriched in basic and acidic residues. 3 consecutive C2H2-type zinc fingers follow at residues Y317–H339, H372–H395, and Y400–H423.

The protein belongs to the INSM1 family.

It is found in the nucleus. In terms of biological role, may act as a transcriptional regulator. Plays a role in noradrenergic neuron, pancreatic and gastrointestinal endocrine cells differentiation during embryonic development. In Xenopus tropicalis (Western clawed frog), this protein is Insulinoma-associated protein 1 (insm1).